Reading from the N-terminus, the 64-residue chain is Large ribosomal subunit protein bL33c (64 aa).

The protein belongs to the bacterial ribosomal protein bL33 family.

The protein localises to the plastid. It localises to the chloroplast. The chain is Large ribosomal subunit protein bL33c (rpl33) from Mesostigma viride (Green alga).